Here is a 142-residue protein sequence, read N- to C-terminus: Hemoglobin subunit alpha-4 (142 aa).

The Globin domain occupies 2–142; that stretch reads TLTDSDKAAI…VATVLTSKYR (141 aa). Residue His-59 coordinates O2. Heme b is bound at residue His-88.

Belongs to the globin family. In terms of assembly, heterotetramer of two alpha chains and two beta chains. In terms of tissue distribution, red blood cells.

This is a larval (tadpole) alpha-globin. The protein is Hemoglobin subunit alpha-4 (hba4) of Xenopus laevis (African clawed frog).